A 90-amino-acid chain; its full sequence is UPF0298 protein RBAM_014860 (90 aa).

This sequence belongs to the UPF0298 family.

It localises to the cytoplasm. This is UPF0298 protein RBAM_014860 from Bacillus velezensis (strain DSM 23117 / BGSC 10A6 / LMG 26770 / FZB42) (Bacillus amyloliquefaciens subsp. plantarum).